The primary structure comprises 713 residues: U3 small nucleolar RNA-associated protein 8 (713 aa).

At Thr95 the chain carries Phosphothreonine. Residues Ser148 and Ser150 each carry the phosphoserine modification.

Interacts with snoRNA U3. Interacts with MPP10 and UTP25. Component of the ribosomal small subunit (SSU) processome composed of at least 40 protein subunits and snoRNA U3. In the absence of snoRNA3, forms a complex with other t-UTPs. This complex can associate with pre-18S ribosomal RNAs.

It localises to the nucleus. It is found in the nucleolus. Its function is as follows. Involved in nucleolar processing of pre-18S ribosomal RNA. Also has a role in nuclear tRNA export. It acts between the steps of tRNA maturation/aminoacylation and its subsequent translocation out of the nucleus. Required for optimal pre-ribosomal RNA transcription by RNA polymerase I together with a subset of U3 proteins required for transcription (t-UTPs). This is U3 small nucleolar RNA-associated protein 8 (UTP8) from Saccharomyces cerevisiae (strain ATCC 204508 / S288c) (Baker's yeast).